Reading from the N-terminus, the 473-residue chain is Argininosuccinate lyase (473 aa).

It belongs to the lyase 1 family. Argininosuccinate lyase subfamily.

Its subcellular location is the cytoplasm. It catalyses the reaction 2-(N(omega)-L-arginino)succinate = fumarate + L-arginine. It functions in the pathway amino-acid biosynthesis; L-arginine biosynthesis; L-arginine from L-ornithine and carbamoyl phosphate: step 3/3. In Mycobacteroides abscessus (strain ATCC 19977 / DSM 44196 / CCUG 20993 / CIP 104536 / JCM 13569 / NCTC 13031 / TMC 1543 / L948) (Mycobacterium abscessus), this protein is Argininosuccinate lyase.